Reading from the N-terminus, the 176-residue chain is Flavodoxin (176 aa).

The Flavodoxin-like domain maps to 4 to 165 (IGIFFGSDTG…RVEKWVKQVA (162 aa)).

It belongs to the flavodoxin family. FMN is required as a cofactor.

Its function is as follows. Low-potential electron donor to a number of redox enzymes. The chain is Flavodoxin (fldA) from Klebsiella pneumoniae.